Reading from the N-terminus, the 354-residue chain is GTPase Obg (354 aa).

Residues Met1 to Ile159 enclose the Obg domain. Residues Ala160–Arg328 form the OBG-type G domain. GTP contacts are provided by residues Gly166–Ser173, Phe191–Thr195, Asp213–Gly216, Asn280–Asp283, and Ser309–Val311. Ser173 and Thr193 together coordinate Mg(2+). Residues Glu335–Val345 are compositionally biased toward acidic residues. The segment at Glu335–Pro354 is disordered.

The protein belongs to the TRAFAC class OBG-HflX-like GTPase superfamily. OBG GTPase family. As to quaternary structure, monomer. Requires Mg(2+) as cofactor.

The protein localises to the cytoplasm. In terms of biological role, an essential GTPase which binds GTP, GDP and possibly (p)ppGpp with moderate affinity, with high nucleotide exchange rates and a fairly low GTP hydrolysis rate. Plays a role in control of the cell cycle, stress response, ribosome biogenesis and in those bacteria that undergo differentiation, in morphogenesis control. The chain is GTPase Obg from Caulobacter vibrioides (strain ATCC 19089 / CIP 103742 / CB 15) (Caulobacter crescentus).